The chain runs to 85 residues: RNA-binding protein Hfq (85 aa).

The region spanning 9–68 (DPFLNALRRERIPVSIYLVNGIKLQGQIESFDQFVVLLKNTVSQMVYKHAISTVVPARIP) is the Sm domain.

The protein belongs to the Hfq family. In terms of assembly, homohexamer.

RNA chaperone that binds small regulatory RNA (sRNAs) and mRNAs to facilitate mRNA translational regulation in response to envelope stress, environmental stress and changes in metabolite concentrations. Also binds with high specificity to tRNAs. This is RNA-binding protein Hfq from Idiomarina loihiensis (strain ATCC BAA-735 / DSM 15497 / L2-TR).